Reading from the N-terminus, the 109-residue chain is UPF0154 protein UPA3_0273 (109 aa).

Residues Val42–Ile62 form a helical membrane-spanning segment.

Belongs to the UPF0154 family.

The protein resides in the cell membrane. In Ureaplasma parvum serovar 3 (strain ATCC 27815 / 27 / NCTC 11736), this protein is UPF0154 protein UPA3_0273.